The primary structure comprises 338 residues: D-erythrose-4-phosphate dehydrogenase (338 aa).

12–13 (RI) contributes to the NAD(+) binding site. Substrate contacts are provided by residues 154 to 156 (SCT), arginine 200, 213 to 214 (TK), and arginine 236. The active-site Nucleophile is the cysteine 155. Asparagine 318 is an NAD(+) binding site.

This sequence belongs to the glyceraldehyde-3-phosphate dehydrogenase family. Epd subfamily. As to quaternary structure, homotetramer.

It localises to the cytoplasm. It catalyses the reaction D-erythrose 4-phosphate + NAD(+) + H2O = 4-phospho-D-erythronate + NADH + 2 H(+). The protein operates within cofactor biosynthesis; pyridoxine 5'-phosphate biosynthesis; pyridoxine 5'-phosphate from D-erythrose 4-phosphate: step 1/5. Functionally, catalyzes the NAD-dependent conversion of D-erythrose 4-phosphate to 4-phosphoerythronate. This is D-erythrose-4-phosphate dehydrogenase from Pectobacterium atrosepticum (strain SCRI 1043 / ATCC BAA-672) (Erwinia carotovora subsp. atroseptica).